The sequence spans 570 residues: Peptidyl-prolyl cis-trans isomerase CYP63 (570 aa).

The 165-residue stretch at 10 to 174 folds into the PPIase cyclophilin-type domain; the sequence is FLDVSIGGDP…SPVKIIDCGE (165 aa). Positions 180–570 are disordered; the sequence is AHDAAEREKG…GKRGLVSYAD (391 aa). The span at 203–219 shows a compositional bias: basic and acidic residues; that stretch reads VSDREAKETRKKESNEK. 2 stretches are compositionally biased toward low complexity: residues 229–238 and 246–259; these read SSDSYSSSSD and EAYS…SSSS. Basic residues predominate over residues 262 to 292; it reads KHRKRKSTTRHKGRRGERKSKGRSGKKKARP. Positions 297 to 309 are enriched in low complexity; sequence STNSSSDTESSSS. Positions 323–339 are enriched in basic and acidic residues; sequence VKVDNADQHANLDDSVK. Ser340 bears the Phosphoserine mark. A compositionally biased stretch (basic residues) spans 340–351; the sequence is SRSRSPIRRRNQ. The span at 352–365 shows a compositional bias: low complexity; the sequence is NSRSKSPSRSPVRV. Composition is skewed to basic and acidic residues over residues 387–397 and 437–467; these read SPREKPTEETV and SPPR…ERSP. The span at 468-490 shows a compositional bias: basic residues; sequence RGRFRSPPRRRSPPRYNRRRRST. A compositionally biased stretch (basic and acidic residues) spans 495–505; the sequence is DGYRRRLRDGS. Positions 509-523 are enriched in basic residues; sequence SPRHRSRSQSPRKRQ. Positions 546–555 are enriched in low complexity; it reads SPAESLSPSH.

It belongs to the cyclophilin-type PPIase family. Interacts with SNRNP35, RNU1, SCL28, SCL30, SR30 and SR34. The binding to SR34 is phosphorylation-dependent. In terms of tissue distribution, ubiquitous.

It is found in the nucleus. The protein localises to the nucleoplasm. The protein resides in the nucleus speckle. It carries out the reaction [protein]-peptidylproline (omega=180) = [protein]-peptidylproline (omega=0). Functionally, PPIases accelerate the folding of proteins. It catalyzes the cis-trans isomerization of proline imidic peptide bonds in oligopeptides. May be implicated in the folding, transport, and assembly of proteins. Probably involved in early steps of spliceosomal assembly. In Arabidopsis thaliana (Mouse-ear cress), this protein is Peptidyl-prolyl cis-trans isomerase CYP63 (CYP63).